Consider the following 250-residue polypeptide: Tumor necrosis factor ligand superfamily member 13 (250 aa).

The propeptide occupies 1-104; sequence MPASSPFLLA…ENGERSRKRR (104 aa). 2 disordered regions span residues 61-82 and 89-108; these read EVSR…PWQS and DALE…AVLT. The 135-residue stretch at 116-250 folds into the THD domain; sequence SVLHLVPINA…HGTFLGFVKL (135 aa). Residue N124 is glycosylated (N-linked (GlcNAc...) asparagine). C196 and C211 are joined by a disulfide.

Belongs to the tumor necrosis factor family. As to quaternary structure, homotrimer. In terms of processing, the precursor is cleaved by furin. In terms of tissue distribution, expressed at high levels in transformed cell lines, cancers of colon, thyroid, lymphoid tissues and specifically expressed in monocytes and macrophages.

The protein resides in the secreted. Its function is as follows. Cytokine that binds to TNFRSF13B/TACI and to TNFRSF17/BCMA. Plays a role in the regulation of tumor cell growth. May be involved in monocyte/macrophage-mediated immunological processes. The sequence is that of Tumor necrosis factor ligand superfamily member 13 (TNFSF13) from Homo sapiens (Human).